The chain runs to 1290 residues: DNA-directed RNA polymerase subunit beta' (1290 aa).

Zn(2+)-binding residues include Cys60, Cys62, Cys75, and Cys78. Mg(2+) is bound by residues Asp535, Asp537, and Asp539. Cys875, Cys953, Cys960, and Cys963 together coordinate Zn(2+).

Belongs to the RNA polymerase beta' chain family. As to quaternary structure, the RNAP catalytic core consists of 2 alpha, 1 beta, 1 beta' and 1 omega subunit. When a sigma factor is associated with the core the holoenzyme is formed, which can initiate transcription. Requires Mg(2+) as cofactor. Zn(2+) is required as a cofactor.

It catalyses the reaction RNA(n) + a ribonucleoside 5'-triphosphate = RNA(n+1) + diphosphate. DNA-dependent RNA polymerase catalyzes the transcription of DNA into RNA using the four ribonucleoside triphosphates as substrates. This is DNA-directed RNA polymerase subunit beta' from Nocardioides sp. (strain ATCC BAA-499 / JS614).